The sequence spans 395 residues: S-adenosylmethionine synthase (395 aa).

Residue H16 coordinates ATP. Position 18 (D18) interacts with Mg(2+). E44 contributes to the K(+) binding site. L-methionine is bound by residues E57 and Q100. Residues 100-110 (QSPDIAQGVDR) form a flexible loop region. Residues 167–169 (DAK), 233–234 (RF), D242, 248–249 (RK), A265, and K269 each bind ATP. D242 serves as a coordination point for L-methionine. K273 lines the L-methionine pocket.

This sequence belongs to the AdoMet synthase family. As to quaternary structure, homotetramer; dimer of dimers. Mg(2+) is required as a cofactor. The cofactor is K(+).

It is found in the cytoplasm. The enzyme catalyses L-methionine + ATP + H2O = S-adenosyl-L-methionine + phosphate + diphosphate. It functions in the pathway amino-acid biosynthesis; S-adenosyl-L-methionine biosynthesis; S-adenosyl-L-methionine from L-methionine: step 1/1. Its function is as follows. Catalyzes the formation of S-adenosylmethionine (AdoMet) from methionine and ATP. The overall synthetic reaction is composed of two sequential steps, AdoMet formation and the subsequent tripolyphosphate hydrolysis which occurs prior to release of AdoMet from the enzyme. This is S-adenosylmethionine synthase from Burkholderia thailandensis (strain ATCC 700388 / DSM 13276 / CCUG 48851 / CIP 106301 / E264).